The sequence spans 109 residues: Cell division protein ZapA (109 aa).

Positions 22 to 99 form a coiled coil; sequence EQQDALNMAA…IEQALLEQGR (78 aa).

The protein belongs to the ZapA family. Type 1 subfamily. Homodimer. Interacts with FtsZ.

The protein resides in the cytoplasm. Its function is as follows. Activator of cell division through the inhibition of FtsZ GTPase activity, therefore promoting FtsZ assembly into bundles of protofilaments necessary for the formation of the division Z ring. It is recruited early at mid-cell but it is not essential for cell division. The polypeptide is Cell division protein ZapA (Yersinia pseudotuberculosis serotype O:1b (strain IP 31758)).